Consider the following 1508-residue polypeptide: DNA-directed RNA polymerase subunit beta' (1508 aa).

Positions 71, 73, 86, and 89 each coordinate Zn(2+). Mg(2+) contacts are provided by aspartate 470, aspartate 472, and aspartate 474. Positions 804, 878, 885, and 888 each coordinate Zn(2+).

The protein belongs to the RNA polymerase beta' chain family. In terms of assembly, the RNAP catalytic core consists of 2 alpha, 1 beta, 1 beta' and 1 omega subunit. When a sigma factor is associated with the core the holoenzyme is formed, which can initiate transcription. The cofactor is Mg(2+). Requires Zn(2+) as cofactor.

The enzyme catalyses RNA(n) + a ribonucleoside 5'-triphosphate = RNA(n+1) + diphosphate. In terms of biological role, DNA-dependent RNA polymerase catalyzes the transcription of DNA into RNA using the four ribonucleoside triphosphates as substrates. This Campylobacter fetus subsp. fetus (strain 82-40) protein is DNA-directed RNA polymerase subunit beta'.